A 296-amino-acid polypeptide reads, in one-letter code: Phosphatidylglycerol--prolipoprotein diacylglyceryl transferase (296 aa).

Transmembrane regions (helical) follow at residues 17-37, 59-79, and 97-117; these read LAVRWYGLMYLVGFIAAIVVG, MMFYGVLGTVLGGRLGYVLFY, and GGMSFHGGFLGVTLAMMLFAW. Arginine 142 is an a 1,2-diacyl-sn-glycero-3-phospho-(1'-sn-glycerol) binding site. Transmembrane regions (helical) follow at residues 230–250 and 257–277; these read MGAVSALFLIGYGLARFTVEF and FLGLLALGLSMGQWLSLPMIL.

The protein belongs to the Lgt family.

It is found in the cell inner membrane. It catalyses the reaction L-cysteinyl-[prolipoprotein] + a 1,2-diacyl-sn-glycero-3-phospho-(1'-sn-glycerol) = an S-1,2-diacyl-sn-glyceryl-L-cysteinyl-[prolipoprotein] + sn-glycerol 1-phosphate + H(+). It functions in the pathway protein modification; lipoprotein biosynthesis (diacylglyceryl transfer). Functionally, catalyzes the transfer of the diacylglyceryl group from phosphatidylglycerol to the sulfhydryl group of the N-terminal cysteine of a prolipoprotein, the first step in the formation of mature lipoproteins. This chain is Phosphatidylglycerol--prolipoprotein diacylglyceryl transferase, found in Burkholderia lata (strain ATCC 17760 / DSM 23089 / LMG 22485 / NCIMB 9086 / R18194 / 383).